Here is a 432-residue protein sequence, read N- to C-terminus: Adenylosuccinate synthetase (432 aa).

GTP-binding positions include 13-19 and 41-43; these read GDEGKGK and GHT. The Proton acceptor role is filled by Asp-14. Residues Asp-14 and Gly-41 each coordinate Mg(2+). IMP is bound by residues 14-17, 39-42, Thr-130, Arg-144, Gln-225, Thr-240, and Arg-304; these read DEGK and NAGH. The active-site Proton donor is His-42. 300–306 contributes to the substrate binding site; it reads ATTGRRR. GTP is bound by residues Arg-306, 332–334, and 415–417; these read KLD and STG.

Belongs to the adenylosuccinate synthetase family. As to quaternary structure, homodimer. Mg(2+) serves as cofactor.

It localises to the cytoplasm. It carries out the reaction IMP + L-aspartate + GTP = N(6)-(1,2-dicarboxyethyl)-AMP + GDP + phosphate + 2 H(+). It participates in purine metabolism; AMP biosynthesis via de novo pathway; AMP from IMP: step 1/2. Functionally, plays an important role in the de novo pathway of purine nucleotide biosynthesis. Catalyzes the first committed step in the biosynthesis of AMP from IMP. The polypeptide is Adenylosuccinate synthetase (Salmonella paratyphi C (strain RKS4594)).